The chain runs to 677 residues: Opioid growth factor receptor (677 aa).

M1 carries the N-acetylmethionine modification. The segment covering 1–29 has biased composition (acidic residues); the sequence is MDDPDCDSTWEEDEEDAEDAEDEDCEDGE. Residues 1–63 are disordered; sequence MDDPDCDSTW…SSFQSRMTGS (63 aa). A compositionally biased stretch (polar residues) spans 54–63; that stretch reads SSFQSRMTGS. Residues 267 to 283 carry the Bipartite nuclear localization signal motif; it reads RRQLVHFAWEHFRPRCK. Residues 295 to 407 are disordered; it reads FKPSSLPHPL…EPGPQSASEV (113 aa). Phosphoserine occurs at positions 299 and 315. 2 stretches are compositionally biased toward basic and acidic residues: residues 305–323 and 331–345; these read EGSR…DHEA and GPEH…DEGP. Residues S349, S361, S378, S382, S403, and S420 each carry the phosphoserine modification. The span at 361–395 shows a compositional bias: basic and acidic residues; the sequence is SQGDEAGGHGEDRPEPLSPKESKKRKLELSRREQP. The span at 421 to 431 shows a compositional bias: polar residues; sequence QGSLRTGTQEV. Positions 421-677 are disordered; sequence QGSLRTGTQE…VESSAKSGKP (257 aa). The span at 466 to 476 shows a compositional bias: low complexity; that stretch reads GDSAAVASGGA. A Phosphoserine modification is found at S484. 7 repeat units span residues 517-536, 537-556, 557-576, 577-596, 597-616, 617-636, and 637-656. Residues 517–656 are 7 X 20 AA approximate tandem repeats of [ST]-P-S-E-T-P-G-P-[SR]-P-A-G-P-[AT]-[GR]-D-E-P-A-[EK]; the sequence is SPSETPGPSP…AGPTRDEPAK (140 aa). The span at 528–538 shows a compositional bias: low complexity; sequence GPAGDEPAESP. 2 positions are modified to phosphoserine: S537 and S557. S617 and S637 each carry phosphoserine.

It belongs to the opioid growth factor receptor family. In terms of tissue distribution, highly expressed in the heart and liver, moderately in skeletal muscle and kidney and to a lesser extent in brain and pancreas. Expressed in fetal tissues including liver and kidney.

It is found in the cytoplasm. It localises to the nucleus. Receptor for opioid growth factor (OGF), also known as Met-enkephalin. Seems to be involved in growth regulation. The polypeptide is Opioid growth factor receptor (OGFR) (Homo sapiens (Human)).